The primary structure comprises 364 residues: Putative [LysW]-aminoadipate semialdehyde/glutamate semialdehyde transaminase (364 aa).

Residues 90–91 and F117 each bind pyridoxal 5'-phosphate; that span reads GT. R120 is a binding site for substrate. A pyridoxal 5'-phosphate-binding site is contributed by 202–205; the sequence is DEVQ. K230 is modified (N6-(pyridoxal phosphate)lysine). Position 254 (S254) interacts with substrate. T255 is a binding site for pyridoxal 5'-phosphate.

The protein belongs to the class-III pyridoxal-phosphate-dependent aminotransferase family. LysJ subfamily. As to quaternary structure, homodimer. Pyridoxal 5'-phosphate is required as a cofactor.

It is found in the cytoplasm. The catalysed reaction is [amino-group carrier protein]-C-terminal-gamma-(L-lysyl)-L-glutamate + 2-oxoglutarate = [amino-group carrier protein]-C-terminal-N-(1-carboxy-5-oxopentan-1-yl)-L-glutamine + L-glutamate. The enzyme catalyses [amino-group carrier protein]-C-terminal-gamma-(L-ornithyl)-L-glutamate + 2-oxoglutarate = [amino-group carrier protein]-C-terminal-gamma-(L-glutamyl-5-semialdehyde)-L-glutamate + L-glutamate. The protein operates within amino-acid biosynthesis; L-lysine biosynthesis via AAA pathway; L-lysine from L-alpha-aminoadipate (Thermus route): step 4/5. It functions in the pathway amino-acid biosynthesis; L-arginine biosynthesis. Involved in both the arginine and lysine biosynthetic pathways. In Pyrococcus abyssi (strain GE5 / Orsay), this protein is Putative [LysW]-aminoadipate semialdehyde/glutamate semialdehyde transaminase.